A 72-amino-acid chain; its full sequence is Large ribosomal subunit protein bL31 (72 aa).

Zn(2+) contacts are provided by cysteine 16, cysteine 18, cysteine 37, and cysteine 40.

Belongs to the bacterial ribosomal protein bL31 family. Type A subfamily. In terms of assembly, part of the 50S ribosomal subunit. Zn(2+) serves as cofactor.

In terms of biological role, binds the 23S rRNA. This Pseudomonas fluorescens (strain Pf0-1) protein is Large ribosomal subunit protein bL31.